The primary structure comprises 231 residues: MEEEFLSFKNFLQEDQDKREKIIRLSREITIQSKRMIFLLHQTSSSDGFPLPKDFDRTSIFEKKIHKELESLKRELAGLNADKFSSACTHGLQEYVEAVTFKFWLQTGTLLSCKDSSFRISINFIDYVLGVCDMTGEIMRFLVTNGSKFSVQQLTQQVKFLRGLHKNCSEIEHLPSKVKSELQQKLSVMENSISKVEGICYSKILREADKRYLNLEVDTATPPEEKRLRST.

Belongs to the translin family.

The protein resides in the cytoplasm. It is found in the nucleus. The chain is Translin-associated protein X homolog from Schizosaccharomyces pombe (strain 972 / ATCC 24843) (Fission yeast).